Reading from the N-terminus, the 247-residue chain is 1-(5-phosphoribosyl)-5-[(5-phosphoribosylamino)methylideneamino] imidazole-4-carboxamide isomerase (247 aa).

The active-site Proton acceptor is the aspartate 8. Residue aspartate 131 is the Proton donor of the active site.

Belongs to the HisA/HisF family.

The protein localises to the cytoplasm. The enzyme catalyses 1-(5-phospho-beta-D-ribosyl)-5-[(5-phospho-beta-D-ribosylamino)methylideneamino]imidazole-4-carboxamide = 5-[(5-phospho-1-deoxy-D-ribulos-1-ylimino)methylamino]-1-(5-phospho-beta-D-ribosyl)imidazole-4-carboxamide. It participates in amino-acid biosynthesis; L-histidine biosynthesis; L-histidine from 5-phospho-alpha-D-ribose 1-diphosphate: step 4/9. The sequence is that of 1-(5-phosphoribosyl)-5-[(5-phosphoribosylamino)methylideneamino] imidazole-4-carboxamide isomerase from Cupriavidus metallidurans (strain ATCC 43123 / DSM 2839 / NBRC 102507 / CH34) (Ralstonia metallidurans).